A 200-amino-acid polypeptide reads, in one-letter code: Dephospho-CoA kinase (200 aa).

The DPCK domain occupies 6–200; it reads AIALSGGIAT…KIKAKYLEKK (195 aa). 14 to 19 is an ATP binding site; the sequence is ATGKST.

It belongs to the CoaE family.

The protein resides in the cytoplasm. The enzyme catalyses 3'-dephospho-CoA + ATP = ADP + CoA + H(+). It functions in the pathway cofactor biosynthesis; coenzyme A biosynthesis; CoA from (R)-pantothenate: step 5/5. Its function is as follows. Catalyzes the phosphorylation of the 3'-hydroxyl group of dephosphocoenzyme A to form coenzyme A. This is Dephospho-CoA kinase from Sulfurimonas denitrificans (strain ATCC 33889 / DSM 1251) (Thiomicrospira denitrificans (strain ATCC 33889 / DSM 1251)).